A 2027-amino-acid polypeptide reads, in one-letter code: MRAAWLIKMTCAYYAAISETKVKKRHVDPFMEWTQIITKYLWEQLQKMAEYYRPGPAGSGGCGSTIGPLPHDVEVAIRQWDYTEKLAMFMFQDGMLDRHEFLTWVLECFEKIRPGEDELLKLLLPLLLRYSGEFVQSAYLSRRLAYFCTRRLALQLDGVSSHSSHVISAQSTSTLPTTPAPQPPTSSTPSTPFSDLLMCPQHRPLVFGLSCILQTILLCCPSALVWHYSLTDSRIKTGSPLDHLPIAPSNLPMPEGNSAFTQQVRAKLREIEQQIKERGQAVEVRWSFDKCQEATAGFTIGRVLHTLEVLDSHSFERSDFSNSLDSLCNRIFGLGPSKDGHEISSDDDAVVSLLCEWAVSCKRSGRHRAMVVAKLLEKRQAEIEAERCGESEAADEKGSIASGSLSAPSAPIFQDVLLQFLDTQAPMLTDPRSENERVEFFNLVLLFCELIRHDVFSHNMYTCTLISRGDLAFGAPGPRPPSPFDDPADDAEHKEAEGSSSSKLEDPGLSESMDIDPSSSVLFEDMEKPDFSLFSPTMPCEGKGSPSPEKPDVEKEVKPPPKEKIEGTLGILYDQPRHVQYATHFPIPQEESCSHECNQRLVVLFGVGKQRDDARHAIKKITKDILKVLNRKGTAETDQLAPIVPLNPGDLTFLGGEDGQKRRRNRPEAFPTAEDIFAKFQHLSHYDQHQVTAQVSRNVLEQITSFALGMSYHLPLVQHVQFIFDLMEYSLSISGLIDFAIQLLNELSVVEAELLLKSSDLVGSYTTSLCLCIVAVLRHYHACLILNQDQMAQVFEGLCGVVKHGMNRSDGSSAERCILAYLYDLYTSCSHLKNKFGELFSDFCSKVKNTIYCNVEPSESNMRWAPEFMIDTLENPAAHTFTYTGLGKSLSENPANRYSFVCNALMHVCVGHHDPDRVNDIAILCAELTGYCKSLSAEWLGVLKALCCSSNNGTCGFNDLLCNVDVSDLSFHDSLATFVAILIARQCLLLEDLIRCAAIPSLLNAACSEQDSEPGARLTCRILLHLFKTPQLNPCQSDGNKPTVGIRSSCDRHLLAASQNRIVDGAVFAVLKAVFVLGDAELKGSGFTVTGGTEELPEEEGGGGSGGRRQGGRNISVETASLDVYAKYVLRSICQQEWVGERCLKSLCEDSNDLQDPVLSSAQAQRLMQLICYPHRLLDNEDGENPQRQRIKRILQNLDQWTMRQSSLELQLMIKQTPNNEMNSLLENIAKATIEVFQQSAETGSSSGSTASNMPSSSKTKPVLSSLERSGVWLVAPLIAKLPTSVQGHVLKAAGEELEKGQHLGSSSRKERDRQKQKSMSLLSQQPFLSLVLTCLKGQDEQREGLLTSLYSQVHQIVNNWRDDQYLDDCKPKQLMHEALKLRLNLVGGMFDTVQRSTQQTTEWAMLLLEIIISGTVDMQSNNELFTTVLDMLSVLINGTLAADMSSISQGSMEENKRAYMNLAKKLQKELGERQSDSLEKVRQLLPLPKQTRDVITCEPQGSLIDTKGNKIAGFDSIFKKEGLQVSTKQKISPWDLFEGLKPSAPLSWGWFGTVRVDRRVARGEEQQRLLLYHTHLRPRPRAYYLEPLPLPPEDEEPPAPTLLEPEKKAPEPPKTDKPGAAPPSTEERKKKSTKGKKRSQPATKTEDYGMGPGRSGPYGVTVPPDLLHHPNPGSITHLNYRQGSIGLYTQNQPLPAGGPRVDPYRPVRLPMQKLPTRPTYPGVLPTTMTGVMGLEPSSYKTSVYRQQQPAVPQGQRLRQQLQAKIQSQGMLGQSSVHQMTPSSSYGLQTSQGYTPYVSHVGLQQHTGPAGTMVPPSYSSQPYQSTHPSTNPTLVDPTRHLQQRPSGYVHQQAPTYGHGLTSTQRFSHQTLQQTPMISTMTPMSAQGVQAGVRSTAILPEQQQQQQQQQQQQQQQQQQQQQQQQQQYHIRQQQQQQILRQQQQQQQQQQQQQQQQQQQQQQQQQQHQQQQQQQAAPPQPQPQSQPQFQRQGLQQTQQQQQTAALVRQLQQQLSNTQPQPSTNIFGRY.

Y13 is modified (phosphotyrosine). Disordered stretches follow at residues 170-191 (QSTS…TPST), 474-516 (GAPG…MDID), 538-563 (MPCE…PPKE), and 1088-1113 (TVTG…QGGR). S482, S512, S545, and S547 each carry phosphoserine. Basic and acidic residues predominate over residues 549–563 (EKPDVEKEVKPPPKE). Phosphoserine is present on residues S1105 and S1116. Positions 1241–1258 (AETGSSSGSTASNMPSSS) are enriched in low complexity. Disordered regions lie at residues 1241–1262 (AETG…KTKP), 1297–1321 (ELEK…KSMS), and 1585–1676 (YLEP…PGSI). Basic and acidic residues-rich tracts occupy residues 1297–1316 (ELEK…DRQK) and 1605–1618 (EPEK…KTDK). The interval 1463–1901 (LAKKLQKELG…VRSTAILPEQ (439 aa)) is interaction with CTNNB1 and GLI3. Residues 1631-1640 (KKSTKGKKRS) are compositionally biased toward basic residues. K1645 carries the post-translational modification N6-acetyllysine. Asymmetric dimethylarginine; alternate is present on R1746. Position 1746 is an omega-N-methylarginine; alternate (R1746). At R1757 the chain carries Omega-N-methylarginine. The segment at 1805–1848 (QHTGPAGTMVPPSYSSQPYQSTHPSTNPTLVDPTRHLQQRPSGY) is disordered. A compositionally biased stretch (low complexity) spans 1815–1830 (PPSYSSQPYQSTHPST). Asymmetric dimethylarginine is present on residues R1844 and R1865. 3 stretches are compositionally biased toward low complexity: residues 1965 to 1975 (QHQQQQQQQAA), 1983 to 1999 (SQPQ…QQQQ), and 2008 to 2021 (LQQQ…QPST). 2 disordered regions span residues 1965–1999 (QHQQ…QQQQ) and 2008–2027 (LQQQ…FGRY).

The protein belongs to the Mediator complex subunit 12 family. Component of the Mediator complex, which is composed of MED1, MED4, MED6, MED7, MED8, MED9, MED10, MED11, MED12, MED13, MED13L, MED14, MED15, MED16, MED17, MED18, MED19, MED20, MED21, MED22, MED23, MED24, MED25, MED26, MED27, MED29, MED30, MED31, CCNC, CDK8 and CDC2L6/CDK11. The MED12, MED13, CCNC and CDK8 subunits form a distinct module termed the CDK8 module. Mediator containing the CDK8 module is less active than Mediator lacking this module in supporting transcriptional activation. Individual preparations of the Mediator complex lacking one or more distinct subunits have been variously termed ARC, CRSP, DRIP, PC2, SMCC and TRAP. Also interacts with CTNNB1 and GLI3.

The protein resides in the nucleus. In terms of biological role, component of the Mediator complex, a coactivator involved in the regulated transcription of nearly all RNA polymerase II-dependent genes. Mediator functions as a bridge to convey information from gene-specific regulatory proteins to the basal RNA polymerase II transcription machinery. Mediator is recruited to promoters by direct interactions with regulatory proteins and serves as a scaffold for the assembly of a functional preinitiation complex with RNA polymerase II and the general transcription factors. This subunit may specifically regulate transcription of targets of the Wnt signaling pathway and SHH signaling pathway. This chain is Mediator of RNA polymerase II transcription subunit 12 (MED12), found in Pan troglodytes (Chimpanzee).